An 825-amino-acid chain; its full sequence is Phenylalanine--tRNA ligase beta subunit (825 aa).

Residues 39–154 (RSWAEGVVLG…KAHPLGSDAR (116 aa)) enclose the tRNA-binding domain. In terms of domain architecture, B5 spans 411–506 (PLERTLKLRL…RLYGYDRFSE (96 aa)). Mg(2+) is bound by residues Asp484, Asp490, Glu493, and Glu494. The region spanning 731-824 (SPFPASDRDI…LEKHFPVTLR (94 aa)) is the FDX-ACB domain.

It belongs to the phenylalanyl-tRNA synthetase beta subunit family. Type 1 subfamily. Tetramer of two alpha and two beta subunits. The cofactor is Mg(2+).

The protein localises to the cytoplasm. The catalysed reaction is tRNA(Phe) + L-phenylalanine + ATP = L-phenylalanyl-tRNA(Phe) + AMP + diphosphate + H(+). The sequence is that of Phenylalanine--tRNA ligase beta subunit from Synechococcus sp. (strain JA-3-3Ab) (Cyanobacteria bacterium Yellowstone A-Prime).